The chain runs to 558 residues: DNA ligase B (558 aa).

K124 (N6-AMP-lysine intermediate) is an active-site residue.

It belongs to the NAD-dependent DNA ligase family. LigB subfamily.

It carries out the reaction NAD(+) + (deoxyribonucleotide)n-3'-hydroxyl + 5'-phospho-(deoxyribonucleotide)m = (deoxyribonucleotide)n+m + AMP + beta-nicotinamide D-nucleotide.. In terms of biological role, catalyzes the formation of phosphodiester linkages between 5'-phosphoryl and 3'-hydroxyl groups in double-stranded DNA using NAD as a coenzyme and as the energy source for the reaction. The polypeptide is DNA ligase B (Klebsiella pneumoniae (strain 342)).